The sequence spans 234 residues: Orotidine 5'-phosphate decarboxylase (234 aa).

Residues Asp-14, Lys-36, 63–72 (DMKLLDIDNT), Thr-118, Arg-179, Gln-188, Gly-208, and Arg-209 contribute to the substrate site. Lys-65 serves as the catalytic Proton donor.

It belongs to the OMP decarboxylase family. Type 1 subfamily. As to quaternary structure, homodimer.

The enzyme catalyses orotidine 5'-phosphate + H(+) = UMP + CO2. It participates in pyrimidine metabolism; UMP biosynthesis via de novo pathway; UMP from orotate: step 2/2. Functionally, catalyzes the decarboxylation of orotidine 5'-monophosphate (OMP) to uridine 5'-monophosphate (UMP). The sequence is that of Orotidine 5'-phosphate decarboxylase from Rhizobium meliloti (strain 1021) (Ensifer meliloti).